Consider the following 231-residue polypeptide: Aspartate/glutamate leucyltransferase (231 aa).

This sequence belongs to the R-transferase family. Bpt subfamily.

The protein localises to the cytoplasm. It carries out the reaction N-terminal L-glutamyl-[protein] + L-leucyl-tRNA(Leu) = N-terminal L-leucyl-L-glutamyl-[protein] + tRNA(Leu) + H(+). The enzyme catalyses N-terminal L-aspartyl-[protein] + L-leucyl-tRNA(Leu) = N-terminal L-leucyl-L-aspartyl-[protein] + tRNA(Leu) + H(+). Its function is as follows. Functions in the N-end rule pathway of protein degradation where it conjugates Leu from its aminoacyl-tRNA to the N-termini of proteins containing an N-terminal aspartate or glutamate. The chain is Aspartate/glutamate leucyltransferase from Pseudoalteromonas atlantica (strain T6c / ATCC BAA-1087).